A 483-amino-acid chain; its full sequence is Protein nucleotidyltransferase YdiU (483 aa).

G87, G89, R90, K110, D122, G123, R173, and R180 together coordinate ATP. Catalysis depends on D249, which acts as the Proton acceptor. Residues N250 and D259 each contribute to the Mg(2+) site. Residue D259 participates in ATP binding.

Belongs to the SELO family. Mg(2+) serves as cofactor. The cofactor is Mn(2+).

The catalysed reaction is L-seryl-[protein] + ATP = 3-O-(5'-adenylyl)-L-seryl-[protein] + diphosphate. It catalyses the reaction L-threonyl-[protein] + ATP = 3-O-(5'-adenylyl)-L-threonyl-[protein] + diphosphate. It carries out the reaction L-tyrosyl-[protein] + ATP = O-(5'-adenylyl)-L-tyrosyl-[protein] + diphosphate. The enzyme catalyses L-histidyl-[protein] + UTP = N(tele)-(5'-uridylyl)-L-histidyl-[protein] + diphosphate. The catalysed reaction is L-seryl-[protein] + UTP = O-(5'-uridylyl)-L-seryl-[protein] + diphosphate. It catalyses the reaction L-tyrosyl-[protein] + UTP = O-(5'-uridylyl)-L-tyrosyl-[protein] + diphosphate. Functionally, nucleotidyltransferase involved in the post-translational modification of proteins. It can catalyze the addition of adenosine monophosphate (AMP) or uridine monophosphate (UMP) to a protein, resulting in modifications known as AMPylation and UMPylation. The chain is Protein nucleotidyltransferase YdiU from Pectobacterium carotovorum subsp. carotovorum (strain PC1).